We begin with the raw amino-acid sequence, 1283 residues long: 5-oxoprolinase PfmaA (1283 aa).

Positions 1256–1283 (NTPGGGAWGKPEGDADGYREEDQAGDGI) are disordered. Positions 1266–1277 (PEGDADGYREED) are enriched in basic and acidic residues.

It belongs to the oxoprolinase family. In terms of assembly, homodimer.

It catalyses the reaction 5-oxo-L-proline + ATP + 2 H2O = L-glutamate + ADP + phosphate + H(+). Its function is as follows. 5-oxoprolinase; part of the gene cluster that mediates the biosynthesis of dihydroxynaphthalene (DHN)-melanin, a bluish-green pigment forming a dark layer in the conidial wall that protects the conidia from UV radiations. The first step of the pathway is the production of the pentaketide 1,3,6,8-tetrahydroxynaphthalene (1,3,6,8-THN or T4HN) by the polyketide synthase PfmaE though condensation of acetyl-CoA with malonyl-CoA. T4HN is not stable and easily oxidizes into the stable form flaviolin. T4HN is also substrate of the hydroxynaphthalene reductase PfmaG to yield scytalone. The scytalone dehydratase PfmaJ then reduces scytalone to 1,3,8-THN. 1,3,8-THN is then substrate of the hydroxynaphthalene reductase PfmaI to yield vermelone. Vermelone is further converted by the multicopper oxidase PfmaD to 1,8-DHN. Finally the laccase PFICI_06862 transforms 1,8-DHN to DHN-melanin. The roles of the 5-oxoprolinase PfmaA and the proline iminopeptidase PfmaB within the cluster have not been elucidated yet. The protein is 5-oxoprolinase PfmaA of Pestalotiopsis fici (strain W106-1 / CGMCC3.15140).